A 369-amino-acid polypeptide reads, in one-letter code: Succinyl-diaminopimelate desuccinylase (369 aa).

His-77 provides a ligand contact to Zn(2+). Asp-79 is a catalytic residue. Asp-103 serves as a coordination point for Zn(2+). The active-site Proton acceptor is Glu-136. Positions 137, 165, and 345 each coordinate Zn(2+).

Belongs to the peptidase M20A family. Zn(2+) is required as a cofactor. It depends on Co(2+) as a cofactor.

It catalyses the reaction N-succinyl-(2S,6S)-2,6-diaminopimelate + H2O = (2S,6S)-2,6-diaminopimelate + succinate. It functions in the pathway amino-acid biosynthesis; L-lysine biosynthesis via DAP pathway; LL-2,6-diaminopimelate from (S)-tetrahydrodipicolinate (succinylase route): step 3/3. This Corynebacterium glutamicum (strain ATCC 13032 / DSM 20300 / JCM 1318 / BCRC 11384 / CCUG 27702 / LMG 3730 / NBRC 12168 / NCIMB 10025 / NRRL B-2784 / 534) protein is Succinyl-diaminopimelate desuccinylase (dapE).